Reading from the N-terminus, the 259-residue chain is UPF0246 protein PputW619_0896 (259 aa).

Belongs to the UPF0246 family.

The chain is UPF0246 protein PputW619_0896 from Pseudomonas putida (strain W619).